A 367-amino-acid chain; its full sequence is Porin Omp2a (367 aa).

The N-terminal stretch at Met1–Ala22 is a signal peptide.

The protein belongs to the alphaproteobacteria porin family. As to quaternary structure, monomer.

The protein resides in the cell outer membrane. Forms passive diffusion pores that allow small molecular weight hydrophilic materials across the outer membrane. The polypeptide is Porin Omp2a (omp2a) (Brucella canis (strain ATCC 23365 / NCTC 10854 / RM-666)).